A 294-amino-acid chain; its full sequence is 2-oxo-3-(phosphooxy)propyl 3-oxoalkanoate synthase (294 aa).

Belongs to the AfsA family.

The catalysed reaction is a medium-chain 3-oxoacyl-[ACP] + dihydroxyacetone phosphate = a (4-alkanoyl-5-oxo-2,5-dihydrofuran-3-yl)methyl phosphate + holo-[ACP] + H2O. Its function is as follows. Involved in the biosynthesis of virginiae butanolide (VB), a gamma-butyrolactone autoregulator that triggers the production of the streptogramin antibiotic virginiamycin. The polypeptide is 2-oxo-3-(phosphooxy)propyl 3-oxoalkanoate synthase (Streptomyces virginiae (Streptomyces cinnamonensis)).